The following is a 701-amino-acid chain: Elongation factor G (701 aa).

In terms of domain architecture, tr-type G spans lysine 6 to leucine 286. Residues alanine 15–threonine 22, aspartate 83–histidine 87, and asparagine 137–aspartate 140 contribute to the GTP site.

It belongs to the TRAFAC class translation factor GTPase superfamily. Classic translation factor GTPase family. EF-G/EF-2 subfamily.

The protein localises to the cytoplasm. In terms of biological role, catalyzes the GTP-dependent ribosomal translocation step during translation elongation. During this step, the ribosome changes from the pre-translocational (PRE) to the post-translocational (POST) state as the newly formed A-site-bound peptidyl-tRNA and P-site-bound deacylated tRNA move to the P and E sites, respectively. Catalyzes the coordinated movement of the two tRNA molecules, the mRNA and conformational changes in the ribosome. The protein is Elongation factor G of Cytophaga hutchinsonii (strain ATCC 33406 / DSM 1761 / CIP 103989 / NBRC 15051 / NCIMB 9469 / D465).